A 164-amino-acid polypeptide reads, in one-letter code: RNA pyrophosphohydrolase (164 aa).

Positions 12–158 (RYRQCAGVML…KREVYRAVVK (147 aa)) constitute a Nudix hydrolase domain. A Nudix box motif is present at residues 47-68 (GGIDPGETQQEAAMRELEEETG).

It belongs to the Nudix hydrolase family. RppH subfamily. A divalent metal cation is required as a cofactor.

Functionally, accelerates the degradation of transcripts by removing pyrophosphate from the 5'-end of triphosphorylated RNA, leading to a more labile monophosphorylated state that can stimulate subsequent ribonuclease cleavage. In Erythrobacter litoralis (strain HTCC2594), this protein is RNA pyrophosphohydrolase.